The following is a 365-amino-acid chain: 4-hydroxy-3-methylbut-2-en-1-yl diphosphate synthase (flavodoxin) (365 aa).

The [4Fe-4S] cluster site is built by Cys-270, Cys-273, Cys-305, and Glu-312.

It belongs to the IspG family. It depends on [4Fe-4S] cluster as a cofactor.

It catalyses the reaction (2E)-4-hydroxy-3-methylbut-2-enyl diphosphate + 2 oxidized [2Fe-2S]-[ferredoxin] + H2O = 2-C-methyl-D-erythritol 2,4-cyclic diphosphate + 2 reduced [2Fe-2S]-[ferredoxin] + H(+). The catalysed reaction is (2E)-4-hydroxy-3-methylbut-2-enyl diphosphate + oxidized [flavodoxin] + H2O + 2 H(+) = 2-C-methyl-D-erythritol 2,4-cyclic diphosphate + reduced [flavodoxin]. It functions in the pathway isoprenoid biosynthesis; isopentenyl diphosphate biosynthesis via DXP pathway; isopentenyl diphosphate from 1-deoxy-D-xylulose 5-phosphate: step 5/6. In terms of biological role, converts 2C-methyl-D-erythritol 2,4-cyclodiphosphate (ME-2,4cPP) into 1-hydroxy-2-methyl-2-(E)-butenyl 4-diphosphate. Involved in density-dependent regulation of 2'-N-acetyltransferase. This chain is 4-hydroxy-3-methylbut-2-en-1-yl diphosphate synthase (flavodoxin), found in Providencia stuartii.